The sequence spans 203 residues: Outer-membrane lipoprotein carrier protein (203 aa).

The signal sequence occupies residues 1-21 (MKKMAIACALLSSVVASSVWA). The tract at residues 178–203 (QQNGAVDPSKFTFTPPQGVTIDDQRK) is disordered.

This sequence belongs to the LolA family. As to quaternary structure, monomer.

The protein localises to the periplasm. In terms of biological role, participates in the translocation of lipoproteins from the inner membrane to the outer membrane. Only forms a complex with a lipoprotein if the residue after the N-terminal Cys is not an aspartate (The Asp acts as a targeting signal to indicate that the lipoprotein should stay in the inner membrane). The protein is Outer-membrane lipoprotein carrier protein of Salmonella paratyphi A (strain ATCC 9150 / SARB42).